Here is a 308-residue protein sequence, read N- to C-terminus: Glutathione synthetase (308 aa).

An ATP-grasp domain is found at 120 to 304; that stretch reads KLGALRFNNL…LADQVIARLL (185 aa). 146–202 serves as a coordination point for ATP; that stretch reads AREQEEVVLKPLGGRAGQGLVRVAGAAPGLEALLELVTDQEQLPVMVQRFLPAVIEG. Residues E275 and N277 each coordinate Mg(2+).

The protein belongs to the prokaryotic GSH synthase family. Requires Mg(2+) as cofactor. The cofactor is Mn(2+).

It catalyses the reaction gamma-L-glutamyl-L-cysteine + glycine + ATP = glutathione + ADP + phosphate + H(+). It functions in the pathway sulfur metabolism; glutathione biosynthesis; glutathione from L-cysteine and L-glutamate: step 2/2. The polypeptide is Glutathione synthetase (Prochlorococcus marinus (strain MIT 9313)).